Reading from the N-terminus, the 412-residue chain is MNAEIIAVGTELLLGQIANTNAQFLSEKLASIGINVYYHTVVGDNNKRLQQAIEVAEERADMLIFTGGLGPTKDDLTKETIASSLAEELVYDEKALASISDYFKRTGREFTENNKKQALVLDGATVFANDHGMAPGMGLNKNGKVYILLPGPPKEMKPMYVSYVEPFLRNFTTGENIYSRVLRFFGIGESQLEVKVQDLIDGQTNPTIAPLANDGEVTLRLTAKHQNVDEAEKLIQHVEDLILERVGEFFYGYDQEFLHDKAIELLKKKGLTLACAESLTGGLFGNQVTESAGVSSVFKGGVICYHNDVKQHVLHVPEEVLFTDGAVSKECARYLAENVKELLEADIGISFTGVAGPDASEHKEPGTVFVGLAIKDEPTVVFPLNLSGSRQQIRERSAKYGFYHLYKKLEEI.

This sequence belongs to the CinA family.

The sequence is that of Putative competence-damage inducible protein from Bacillus cereus (strain AH820).